We begin with the raw amino-acid sequence, 113 residues long: Probable mesentericin-Y105 immunity protein (113 aa).

It belongs to the immunity protein EntA family.

Imparts immunity to mesentericin-Y105 to naturally sensitive host strains. This Leuconostoc mesenteroides protein is Probable mesentericin-Y105 immunity protein (mesI).